Here is a 181-residue protein sequence, read N- to C-terminus: Sporozoite-associated mosquito saliva protein 1 (181 aa).

The N-terminal stretch at 1 to 24 is a signal peptide; sequence MNSSWRVVVFLGLVILCHSRRARA.

In terms of tissue distribution, salivary gland (at protein level). As to expression, (Microbial infection) Detected with Plasmodium berghei sporozoites isolated from the saliva of infected Anopheles gambiae mosquitoes (at protein level).

It is found in the secreted. Functionally, decreases host neutrophil chemotaxis induced by N-formylmethionine-leucyl-phenylalanine (fMLP). (Microbial infection) Interacts with the surface of Plasmodium berghei sporozoites. Enhances sporozoite gliding activity. Enhances host hepatocyte traversal by sporozoites. In Anopheles gambiae (African malaria mosquito), this protein is Sporozoite-associated mosquito saliva protein 1.